A 504-amino-acid polypeptide reads, in one-letter code: Pre-mRNA-processing factor 19 (504 aa).

Ser-2 bears the N-acetylserine mark. The U-box domain maps to 2 to 73 (SLICSISNEV…KPPSATSIPA (72 aa)). The tract at residues 68-223 (ATSIPAILKA…VGLHSASIPG (156 aa)) is may mediate interaction with PSMC5. An N6-acetyllysine mark is found at Lys-122, Lys-179, Lys-244, and Lys-261. Residues 219 to 259 (ASIPGILALDLCPSDTNKILTGGADKNVVVFDKSSEQILAT) form a WD 1 repeat. WD repeat units lie at residues 262-301 (GHTKKVTSVVFHPSQELVFSASPDATIRIWSVPNASCVQV), 304-345 (AHES…TKVT), 348-387 (TSGCSLTCAQFHPDGLIFGTGTMDSQIKIWDLKERTNVAN), 390-429 (GHSGPITSIAFSENGYYLATAADDSSVKLWDLRKLKNFKT), 433-472 (DNNFEVKSLIFDQSGTYLALGGTDVQIYICKQWTEILHFT), and 473-503 (EHSGLTTGVAFGHHAKFIASTGMDRSLKFYS).

It belongs to the WD repeat PRP19 family. Homotetramer. Component of activated, catalytic and post-catalytic spliceosomes. Component of the Prp19 complex/PRP19C/Nineteen complex/NTC and related complexes described as PRP19-CDC5L splicing complex and PSO4 complex. A homotetramer of PRPF19, CDC5L, PLRG1 and BCAS2 constitute the core of those complexes. The interaction with CDC5L, PLRG1 and BCAS2 is direct within this core complex. At least three less stably associated proteins CTNNBL1, CWC15 and HSPA8 are found in the Prp19 complex. The Prp19 complex associates with the spliceosome during its assembly and remodeling recruiting additional proteins. Component of the XAB2 complex, a multimeric protein complex composed of XAB2, PRPF19, AQR, ZNF830, ISY1, and PPIE. Interacts with CWC22 and EIF4A3 in an RNA-independent manner. Interacts with RPA1 and RPA2; the PRP19-CDC5L complex is recruited to the sites of DNA repair where it interacts with the replication protein A complex (RPA). Interacts with SETMAR; required for SETMAR recruitment to site of DNA damage. Interacts with U2AF2; the interaction is direct and recruits the Prp19 complex to RNA polymerase II C-terminal domain (CTD) and the pre-mRNA. Interacts with PRPF3. Interacts with APEX1, DNTT and PSMB4. Interacts with PSMC5. Interacts with KNSTRN. Interacts (via N-terminus) with CDC5L. Interacts with KHDC4. Interacts with USB1. Interacts with DDX41.

It is found in the nucleus. Its subcellular location is the nucleoplasm. The protein resides in the cytoplasm. It localises to the cytoskeleton. The protein localises to the spindle. It is found in the lipid droplet. The catalysed reaction is S-ubiquitinyl-[E2 ubiquitin-conjugating enzyme]-L-cysteine + [acceptor protein]-L-lysine = [E2 ubiquitin-conjugating enzyme]-L-cysteine + N(6)-ubiquitinyl-[acceptor protein]-L-lysine.. Its pathway is protein modification; protein ubiquitination. Functionally, ubiquitin-protein ligase which is a core component of several complexes mainly involved pre-mRNA splicing and DNA repair. Required for pre-mRNA splicing as component of the spliceosome. Core component of the PRP19C/Prp19 complex/NTC/Nineteen complex which is part of the spliceosome and participates in its assembly, its remodeling and is required for its activity. During assembly of the spliceosome, mediates 'Lys-63'-linked polyubiquitination of the U4 spliceosomal protein PRPF3. Ubiquitination of PRPF3 allows its recognition by the U5 component PRPF8 and stabilizes the U4/U5/U6 tri-snRNP spliceosomal complex. Recruited to RNA polymerase II C-terminal domain (CTD) and the pre-mRNA, it may also couple the transcriptional and spliceosomal machineries. The XAB2 complex, which contains PRPF19, is also involved in pre-mRNA splicing, transcription and transcription-coupled repair. Beside its role in pre-mRNA splicing PRPF19, as part of the PRP19-CDC5L complex, plays a role in the DNA damage response/DDR. It is recruited to the sites of DNA damage by the RPA complex where PRPF19 directly ubiquitinates RPA1 and RPA2. 'Lys-63'-linked polyubiquitination of the RPA complex allows the recruitment of the ATR-ATRIP complex and the activation of ATR, a master regulator of the DNA damage response. May also play a role in DNA double-strand break (DSB) repair by recruiting the repair factor SETMAR to altered DNA. As part of the PSO4 complex may also be involved in the DNA interstrand cross-links/ICLs repair process. In addition, may also mediate 'Lys-48'-linked polyubiquitination of substrates and play a role in proteasomal degradation. May play a role in the biogenesis of lipid droplets. May play a role in neural differentiation possibly through its function as part of the spliceosome. The protein is Pre-mRNA-processing factor 19 (PRPF19) of Bos taurus (Bovine).